The chain runs to 460 residues: MAVSLWQQCIGRLQDELSAQQFSMWIRPLQAEMDGDTLVLYAPNRFVLDWVRDKYINIINQFFTEQMGNDAPKLRFDIGSRPSAKKPEPAPVAAVRVPSPQTKASVGTAFNTTEPVANTNHRSNINPTYQFDNFVEGKSNQLGKAAALQVAENPGGAYNPLFLYGGTGLGKTHLLHAVGNGIIKNNPNAKVVYMHSERFVQDMVKALQNNAIEEFKRYYRSVDALFIDDIQFFANKDRSQEEFFHTFNALLEGNHQIILTSDRYPKEIDGVEDRLKSRFGWGLTVAIEPPELETRVAILMRKAQESGINLPDEVAFFIAKRLRSNVRELEGALNRVIANANFTGRPITIDFVREALRDLLALQEKLVTIDNIQKTVAEYYKIKMADMLSKRRSRSVARPRQVAMALSKELTNQSLPEIGDAFGGRDHTTVLHACRKIAQLREESHDIKEDYANLIRTLSS.

The tract at residues 1-84 (MAVSLWQQCI…RFDIGSRPSA (84 aa)) is domain I, interacts with DnaA modulators. The tract at residues 84-123 (AKKPEPAPVAAVRVPSPQTKASVGTAFNTTEPVANTNHRS) is domain II. Residues 124–340 (NINPTYQFDN…GALNRVIANA (217 aa)) form a domain III, AAA+ region region. Gly168, Gly170, Lys171, and Thr172 together coordinate ATP. The domain IV, binds dsDNA stretch occupies residues 341-460 (NFTGRPITID…YANLIRTLSS (120 aa)).

The protein belongs to the DnaA family. As to quaternary structure, oligomerizes as a right-handed, spiral filament on DNA at oriC.

It localises to the cytoplasm. Its function is as follows. Plays an essential role in the initiation and regulation of chromosomal replication. ATP-DnaA binds to the origin of replication (oriC) to initiate formation of the DNA replication initiation complex once per cell cycle. Binds the DnaA box (a 9 base pair repeat at the origin) and separates the double-stranded (ds)DNA. Forms a right-handed helical filament on oriC DNA; dsDNA binds to the exterior of the filament while single-stranded (ss)DNA is stabiized in the filament's interior. The ATP-DnaA-oriC complex binds and stabilizes one strand of the AT-rich DNA unwinding element (DUE), permitting loading of DNA polymerase. After initiation quickly degrades to an ADP-DnaA complex that is not apt for DNA replication. Binds acidic phospholipids. In Shewanella oneidensis (strain ATCC 700550 / JCM 31522 / CIP 106686 / LMG 19005 / NCIMB 14063 / MR-1), this protein is Chromosomal replication initiator protein DnaA.